A 713-amino-acid polypeptide reads, in one-letter code: U3 small nucleolar RNA-associated protein 8 (713 aa).

T95 bears the Phosphothreonine mark. Residues S148 and S150 each carry the phosphoserine modification.

In terms of assembly, interacts with snoRNA U3. Interacts with MPP10 and UTP25. Component of the ribosomal small subunit (SSU) processome composed of at least 40 protein subunits and snoRNA U3. In the absence of snoRNA3, forms a complex with other t-UTPs. This complex can associate with pre-18S ribosomal RNAs.

The protein resides in the nucleus. Its subcellular location is the nucleolus. Involved in nucleolar processing of pre-18S ribosomal RNA. Also has a role in nuclear tRNA export. It acts between the steps of tRNA maturation/aminoacylation and its subsequent translocation out of the nucleus. Required for optimal pre-ribosomal RNA transcription by RNA polymerase I together with a subset of U3 proteins required for transcription (t-UTPs). The protein is U3 small nucleolar RNA-associated protein 8 (UTP8) of Saccharomyces cerevisiae (strain ATCC 204508 / S288c) (Baker's yeast).